The chain runs to 68 residues: Small ribosomal subunit protein bS21 (68 aa).

The segment at 39 to 68 is disordered; the sequence is PPSVKRVRKKQESERRHRKERAMRRRMMEE. Positions 54–68 are enriched in basic residues; sequence RHRKERAMRRRMMEE.

It belongs to the bacterial ribosomal protein bS21 family.

The protein is Small ribosomal subunit protein bS21 of Orientia tsutsugamushi (strain Ikeda) (Rickettsia tsutsugamushi).